We begin with the raw amino-acid sequence, 70 residues long: Bowman-Birk type proteinase inhibitor A-II (70 aa).

7 disulfides stabilise this stretch: cysteine 11–cysteine 68, cysteine 12–cysteine 29, cysteine 15–cysteine 63, cysteine 17–cysteine 27, cysteine 36–cysteine 43, cysteine 40–cysteine 55, and cysteine 45–cysteine 53.

The protein belongs to the Bowman-Birk serine protease inhibitor family.

In terms of biological role, these proteins inhibit trypsin and chymotrypsin, having 2 sites of interaction with trypsin. The site of interaction with chymotrypsin has not been determined but is not independent of the trypsin-reactive sites. This is Bowman-Birk type proteinase inhibitor A-II from Arachis hypogaea (Peanut).